Consider the following 544-residue polypeptide: Glucans biosynthesis protein G 1 (544 aa).

Positions 1–33 (MVSLLRCQSFKPSSIICSLALSAAFALSGTAFA) are cleaved as a signal peptide. The segment at 36–58 (SKPAENKPATPVVSPPKATAPSA) is disordered.

This sequence belongs to the OpgD/OpgG family.

It localises to the periplasm. Its pathway is glycan metabolism; osmoregulated periplasmic glucan (OPG) biosynthesis. Involved in the biosynthesis of osmoregulated periplasmic glucans (OPGs). The chain is Glucans biosynthesis protein G 1 (opgG1) from Shewanella oneidensis (strain ATCC 700550 / JCM 31522 / CIP 106686 / LMG 19005 / NCIMB 14063 / MR-1).